We begin with the raw amino-acid sequence, 233 residues long: Glyceraldehyde-3-phosphate dehydrogenase A, chloroplastic (233 aa).

D-glyceraldehyde 3-phosphate contacts are provided by residues 49–51, Thr80, Arg95, 108–109, and Arg131; these read SCT and TG. The active-site Nucleophile is Cys50. An NADP(+)-binding site is contributed by Asn213.

The protein belongs to the glyceraldehyde-3-phosphate dehydrogenase family. Tetramer of either four A chains (GAPDH 2) or two A and two B chains (GAPDH 1).

The protein resides in the plastid. The protein localises to the chloroplast. The enzyme catalyses D-glyceraldehyde 3-phosphate + phosphate + NADP(+) = (2R)-3-phospho-glyceroyl phosphate + NADPH + H(+). It participates in carbohydrate biosynthesis; Calvin cycle. This is Glyceraldehyde-3-phosphate dehydrogenase A, chloroplastic (GAPA) from Sinapis alba (White mustard).